Consider the following 150-residue polypeptide: 3-dehydroquinate dehydratase (150 aa).

The active-site Proton acceptor is the Tyr26. The substrate site is built by Asn77, His83, and Asp90. His103 acts as the Proton donor in catalysis. Residues 104–105 (LS) and Arg114 contribute to the substrate site.

It belongs to the type-II 3-dehydroquinase family. In terms of assembly, homododecamer.

It carries out the reaction 3-dehydroquinate = 3-dehydroshikimate + H2O. It participates in metabolic intermediate biosynthesis; chorismate biosynthesis; chorismate from D-erythrose 4-phosphate and phosphoenolpyruvate: step 3/7. Functionally, catalyzes a trans-dehydration via an enolate intermediate. This Klebsiella pneumoniae (strain 342) protein is 3-dehydroquinate dehydratase.